Here is a 426-residue protein sequence, read N- to C-terminus: 3-phosphoshikimate 1-carboxyvinyltransferase (426 aa).

Residues Lys20, Ser21, and Arg25 each contribute to the 3-phosphoshikimate site. Residue Lys20 participates in phosphoenolpyruvate binding. Positions 92 and 120 each coordinate phosphoenolpyruvate. 3-phosphoshikimate is bound by residues Ser166, Gln168, Asp312, and Lys339. Gln168 serves as a coordination point for phosphoenolpyruvate. Asp312 acts as the Proton acceptor in catalysis. Arg385 contacts phosphoenolpyruvate.

It belongs to the EPSP synthase family. As to quaternary structure, monomer.

It is found in the cytoplasm. It carries out the reaction 3-phosphoshikimate + phosphoenolpyruvate = 5-O-(1-carboxyvinyl)-3-phosphoshikimate + phosphate. Its pathway is metabolic intermediate biosynthesis; chorismate biosynthesis; chorismate from D-erythrose 4-phosphate and phosphoenolpyruvate: step 6/7. Its function is as follows. Catalyzes the transfer of the enolpyruvyl moiety of phosphoenolpyruvate (PEP) to the 5-hydroxyl of shikimate-3-phosphate (S3P) to produce enolpyruvyl shikimate-3-phosphate and inorganic phosphate. The protein is 3-phosphoshikimate 1-carboxyvinyltransferase of Streptococcus suis (strain 98HAH33).